We begin with the raw amino-acid sequence, 185 residues long: Probable calcium-binding protein CML10 (185 aa).

Residues 1-41 (MVKIKMPALFRRRSGSKSPPLPQADPASGGGSPAPTPEEEM) are disordered. EF-hand domains follow at residues 36–71 (TPEEEMERVFRKFDANGDGRISRSELGALFESLGHA), 72–107 (ATDDELARMMAEADADGDGFISLDEFAALNATASGD), 110–145 (AVEEDLRHAFRVFDADGNGTISAAELARVLHGLGEK), and 146–181 (ATVQQCRRMIEGVDQNGDGLISFEEFKVMMAGGGSF). Positions 49, 51, 53, 55, 60, 85, 87, 89, 96, 123, 125, 127, 129, 134, 159, 161, 163, and 170 each coordinate Ca(2+).

In terms of biological role, potential calcium sensor. This chain is Probable calcium-binding protein CML10 (CML10), found in Oryza sativa subsp. japonica (Rice).